The sequence spans 327 residues: Aldo-keto reductase family 1 member A1 (327 aa).

NADP(+) is bound by residues 13 to 22, threonine 23, tryptophan 24, and aspartate 47; that span reads GQKIPLIGLG. Catalysis depends on tyrosine 52, which acts as the Proton donor. Serine 164, asparagine 165, serine 213, leucine 215, serine 217, lysine 265, serine 266, valine 267, threonine 268, arginine 271, glutamine 274, and asparagine 275 together coordinate NADP(+).

This sequence belongs to the aldo/keto reductase family.

Its subcellular location is the cytoplasm. The protein resides in the cytosol. It localises to the apical cell membrane. The enzyme catalyses a primary alcohol + NADP(+) = an aldehyde + NADPH + H(+). It catalyses the reaction S-nitroso-CoA + NADPH + H(+) = sulfinamide-CoA + NADP(+). The catalysed reaction is S-nitrosoglutathione + NADPH + H(+) = S-(hydroxysulfenamide)glutathione + NADP(+). Functionally, catalyzes the NADPH-dependent reduction of a wide variety of carbonyl-containing compounds to their corresponding alcohols. Displays enzymatic activity towards endogenous metabolites such as aromatic and aliphatic aldehydes, ketones, monosaccharides and bile acids. Acts as an aldehyde-detoxification enzyme. Also acts as an inhibitor of protein S-nitrosylation by mediating degradation of S-nitroso-coenzyme A (S-nitroso-CoA), a cofactor required to S-nitrosylate proteins. Also acts as a S-nitroso-glutathione reductase by catalyzing the NADPH-dependent reduction of S-nitrosoglutathione. Displays no reductase activity towards retinoids. The sequence is that of Aldo-keto reductase family 1 member A1 (AKR1A1) from Gallus gallus (Chicken).